The primary structure comprises 289 residues: Heme oxygenase 1, chloroplastic (289 aa).

A chloroplast-targeting transit peptide spans 1–64 (MAPAAASLTA…SASSSRRMVV (64 aa)). Histidine 96 lines the heme b pocket.

This sequence belongs to the heme oxygenase family.

The protein localises to the plastid. The protein resides in the chloroplast. It carries out the reaction heme b + 3 reduced [NADPH--hemoprotein reductase] + 3 O2 = biliverdin IXalpha + CO + Fe(2+) + 3 oxidized [NADPH--hemoprotein reductase] + 3 H2O + H(+). In terms of biological role, catalyzes the opening of the heme ring to form the open-chain tetrapyrrole biliverdin IX with the release of iron and carbon monoxide (CO). Is a key enzyme in the synthesis of the chromophore of the phytochrome family of plant photoreceptors. Essential for photoperiod response and repression of flowering through cytochromes that inhibit flowering by affecting both HD1 and EHD1 flowering pathways. In Oryza sativa subsp. japonica (Rice), this protein is Heme oxygenase 1, chloroplastic (HO1).